A 651-amino-acid chain; its full sequence is MSESEAKSRSATPPSKAKQATPTTTAAANGEKKLTNKELKELKKQEKAAKRAAMKQANGISIEQQQQQAQMKKEKKQLQREQQQKREQKQKNANKKKQNERNVKKSTLFGHLETTEERRATILALTSAVSSPKTSRITAAGLMVPVVASALSGSNVLTASSLMPVGPNASSTVSASAPASTTTTLPASSAALSAGTSSASTNTPTAIQQEIASSNASDVAKTLASISLEAGEFNVIPGISSVIPTVLEQSFDNSSLISSVKELLLNKDLIHPSILLLTSHLAHYKIVGSIPRCIAMLEVFQIVIKDYQTPKGTTLSRNLTSYLSHQIDLLKKARPLSVTMGNAIRWLKQEISLIDPSTPDKAAKKDLCEKIGQFAKEKIELADQLIIDNASTQIEESTTIVTYGSSKVLTELLLHNAISLKKNIKVIVVDSRPLFEGRKMAETLRNAGVNVMYALITSLDTIFNMDVDYVFLGAHSILSNGFLYSRAGTAMLAMSAKRRNIPVLVCCESLKFSQRVQLDSVTFNELADPNDLVNIDYENPVERRGNKGALLNQFIKERKFEKKKLAMENKPKGNKIGGKKGSEGESKDASNEEDSNSKNILDGWQELPSLNIVNILYDLTPPEYIKKVITEFGALPPSSVPVILREYKGSA.

The tract at residues 1–108 is disordered; sequence MSESEAKSRS…NERNVKKSTL (108 aa). Position 2 is an N-acetylserine (S2). The segment covering 11–28 has biased composition (low complexity); sequence ATPPSKAKQATPTTTAAA. Composition is skewed to basic and acidic residues over residues 30 to 49 and 76 to 90; these read GEKKLTNKELKELKKQEKAA and KQLQREQQQKREQKQ. The residue at position 106 (S106) is a Phosphoserine. T121 is modified (phosphothreonine). The tract at residues 566 to 600 is disordered; it reads AMENKPKGNKIGGKKGSEGESKDASNEEDSNSKNI. Positions 580–590 are enriched in basic and acidic residues; that stretch reads KGSEGESKDAS.

Belongs to the eIF-2B alpha/beta/delta subunits family. Component of the translation initiation factor 2B (eIF2B) complex which is a heterodecamer of two sets of five different subunits: alpha, beta, gamma, delta and epsilon. Subunits alpha, beta and delta comprise a regulatory subcomplex and subunits epsilon and gamma comprise a catalytic subcomplex. Within the complex, the hexameric regulatory complex resides at the center, with the two heterodimeric catalytic subcomplexes bound on opposite sides.

It is found in the cytoplasm. It localises to the cytosol. Functionally, acts as a component of the translation initiation factor 2B (eIF2B) complex, which catalyzes the exchange of GDP for GTP on the eukaryotic initiation factor 2 (eIF2) complex gamma subunit. Its guanine nucleotide exchange factor activity is repressed when bound to eIF2 complex phosphorylated on the alpha subunit, thereby limiting the amount of methionyl-initiator methionine tRNA available to the ribosome and consequently global translation is repressed. It activates the synthesis of GCN4 in yeast under amino acid starvation conditions by suppressing the inhibitory effects of multiple AUG codons present in the leader of GCN4 mRNA. It may promote either repression or activation of GCN4 expression depending on amino acid availability. GCD2 is also required for cell viability. Its function can partially be replaced by GCN3 under normal growth conditions in GCD2-defective mutants, under AA starvation conditions GCN3 is an antagonist (GCN4 translational activator). The polypeptide is Translation initiation factor eIF2B subunit delta (GCD2) (Saccharomyces cerevisiae (strain ATCC 204508 / S288c) (Baker's yeast)).